A 362-amino-acid chain; its full sequence is Peptide chain release factor 1 (362 aa).

Gln-237 is modified (N5-methylglutamine). The span at 284 to 295 (EEEKRQAEETST) shows a compositional bias: basic and acidic residues. Residues 284–304 (EEEKRQAEETSTRRNLVASGD) are disordered.

Belongs to the prokaryotic/mitochondrial release factor family. Post-translationally, methylated by PrmC. Methylation increases the termination efficiency of RF1.

The protein localises to the cytoplasm. Its function is as follows. Peptide chain release factor 1 directs the termination of translation in response to the peptide chain termination codons UAG and UAA. The protein is Peptide chain release factor 1 of Pseudoalteromonas atlantica (strain T6c / ATCC BAA-1087).